A 375-amino-acid chain; its full sequence is Monocyte differentiation antigen CD14 (375 aa).

A signal peptide spans 1–19 (MERASCLLLLLLPLVHVSA). Cystine bridges form between C25-C36 and C34-C51. Residue N37 is glycosylated (N-linked (GlcNAc...) asparagine). LRR repeat units lie at residues 54–82 (AVEV…PRQY), 83–118 (ADTV…YSRL), 119–144 (KELT…GLAL), 145–172 (SSLR…KPGL), 173–196 (KVLS…FPAL), 197–224 (TSLD…FPAI), 225–251 (QNLA…GVQP), 252–278 (HSLD…SSAL), 279–299 (NSLN…PAKL), 300–321 (RVLD…LPEV), and 322–349 (DNLT…SGVV). A glycan (N-linked (GlcNAc...) asparagine) is linked at N151. 2 disulfide bridges follow: C187–C217 and C241–C272. N282 carries an N-linked (GlcNAc...) asparagine glycan. A required for response to bacterial lipopolysaccharide (LPS) region spans residues 290-375 (QVPKGLPAKL…VLLQGARGFA (86 aa)). A glycan (N-linked (GlcNAc...) asparagine) is linked at N323. O-linked (GalNAc...) threonine glycosylation is present at T336. N345 carries the GPI-anchor amidated asparagine lipid modification. Residues 346–375 (SGVVPACARSTLSVGVSGTLVLLQGARGFA) constitute a propeptide, removed in mature form.

Interacts with LPS-bound LPB. Belongs to the lipopolysaccharide (LPS) receptor, a multi-protein complex containing at least CD14, LY96 and TLR4. Interacts with LPAR1. Interacts with the TLR2:TLR6 or TLR2:TLR1 heterodimers; upon interaction with ligands such as diacylated lipopeptides and triacylated lipopeptides, respectively. Interacts with MYO18A. Interacts with FSTL1. Post-translationally, N- and O- glycosylated. O-glycosylated with a core 1 or possibly core 8 glycan. As to expression, detected on macrophages (at protein level). Expressed strongly on the surface of monocytes and weakly on the surface of granulocytes; also expressed by most tissue macrophages.

It localises to the cell membrane. It is found in the secreted. The protein localises to the membrane raft. The protein resides in the golgi apparatus. In terms of biological role, coreceptor for bacterial lipopolysaccharide. In concert with LBP, binds to monomeric lipopolysaccharide and delivers it to the LY96/TLR4 complex, thereby mediating the innate immune response to bacterial lipopolysaccharide (LPS). Acts via MyD88, TIRAP and TRAF6, leading to NF-kappa-B activation, cytokine secretion and the inflammatory response. Acts as a coreceptor for TLR2:TLR6 heterodimer in response to diacylated lipopeptides and for TLR2:TLR1 heterodimer in response to triacylated lipopeptides, these clusters trigger signaling from the cell surface and subsequently are targeted to the Golgi in a lipid-raft dependent pathway. Binds electronegative LDL (LDL(-)) and mediates the cytokine release induced by LDL(-). This chain is Monocyte differentiation antigen CD14 (CD14), found in Homo sapiens (Human).